The primary structure comprises 268 residues: Zinc import ATP-binding protein ZnuC (268 aa).

The ABC transporter domain occupies 16–231 (IQLKNINVVF…PTFMRLWGNQ (216 aa)). 48–55 (GPNGGGKS) contributes to the ATP binding site.

The protein belongs to the ABC transporter superfamily. Zinc importer (TC 3.A.1.15.5) family. As to quaternary structure, the complex is composed of two ATP-binding proteins (ZnuC), two transmembrane proteins (ZnuB) and a solute-binding protein (ZnuA).

The protein localises to the cell inner membrane. It carries out the reaction Zn(2+)(out) + ATP(in) + H2O(in) = Zn(2+)(in) + ADP(in) + phosphate(in) + H(+)(in). In terms of biological role, part of the ABC transporter complex ZnuABC involved in zinc import. Responsible for energy coupling to the transport system. The sequence is that of Zinc import ATP-binding protein ZnuC from Haemophilus influenzae (strain ATCC 51907 / DSM 11121 / KW20 / Rd).